Consider the following 54-residue polypeptide: Protein YmjE (54 aa).

The polypeptide is Protein YmjE (Escherichia coli (strain K12)).